The sequence spans 143 residues: Peptide methionine sulfoxide reductase MsrB (143 aa).

In terms of domain architecture, MsrB spans 16-139 (DAELRRRLTP…NSAALNFEAK (124 aa)). Residues Cys-55, Cys-58, Cys-104, and Cys-107 each contribute to the Zn(2+) site. The active-site Nucleophile is Cys-128.

This sequence belongs to the MsrB Met sulfoxide reductase family. Zn(2+) is required as a cofactor.

It catalyses the reaction L-methionyl-[protein] + [thioredoxin]-disulfide + H2O = L-methionyl-(R)-S-oxide-[protein] + [thioredoxin]-dithiol. In Burkholderia mallei (strain NCTC 10229), this protein is Peptide methionine sulfoxide reductase MsrB.